Consider the following 232-residue polypeptide: Thiamine import ATP-binding protein ThiQ (232 aa).

The ABC transporter domain maps to 2–230 (LKLTDITWLY…KASASAILGI (229 aa)). Residue 32-39 (GPSGAGKS) coordinates ATP.

The protein belongs to the ABC transporter superfamily. Thiamine importer (TC 3.A.1.19.1) family. In terms of assembly, the complex is composed of two ATP-binding proteins (ThiQ), two transmembrane proteins (ThiP) and a solute-binding protein (ThiB).

The protein localises to the cell inner membrane. It catalyses the reaction thiamine(out) + ATP + H2O = thiamine(in) + ADP + phosphate + H(+). Part of the ABC transporter complex ThiBPQ involved in thiamine import. Responsible for energy coupling to the transport system. This Shigella flexneri serotype 5b (strain 8401) protein is Thiamine import ATP-binding protein ThiQ.